Reading from the N-terminus, the 247-residue chain is Protein AC124 (247 aa).

Its subcellular location is the host cytoplasm. The protein resides in the host nucleus. Its function is as follows. Accelerates mortality in insect larvae. The polypeptide is Protein AC124 (Lepidoptera (butterflies and moths)).